A 112-amino-acid chain; its full sequence is Larval cuticle protein 4 (112 aa).

The N-terminal stretch at 1-16 (MFKILLVCALVALVAA) is a signal peptide. In terms of domain architecture, Chitin-binding type R&amp;R spans 31-92 (ADGFVSKLVL…PQSDLLPTPP (62 aa)).

Its function is as follows. Component of the larval cuticle. This Drosophila melanogaster (Fruit fly) protein is Larval cuticle protein 4 (Lcp4).